The primary structure comprises 188 residues: Xanthine phosphoribosyltransferase (188 aa).

Residues leucine 20 and asparagine 27 each contribute to the xanthine site. 127–131 (AHGEA) is a binding site for 5-phospho-alpha-D-ribose 1-diphosphate. Lysine 155 serves as a coordination point for xanthine.

This sequence belongs to the purine/pyrimidine phosphoribosyltransferase family. Xpt subfamily. As to quaternary structure, homodimer.

It localises to the cytoplasm. The enzyme catalyses XMP + diphosphate = xanthine + 5-phospho-alpha-D-ribose 1-diphosphate. It functions in the pathway purine metabolism; XMP biosynthesis via salvage pathway; XMP from xanthine: step 1/1. Functionally, converts the preformed base xanthine, a product of nucleic acid breakdown, to xanthosine 5'-monophosphate (XMP), so it can be reused for RNA or DNA synthesis. This Heliobacterium modesticaldum (strain ATCC 51547 / Ice1) protein is Xanthine phosphoribosyltransferase.